Consider the following 376-residue polypeptide: Zinc finger CCCH domain-containing protein C337.12 (376 aa).

Residues Asn2–Glu25 adopt a coiled-coil conformation. A disordered region spans residues Ser60 to Ser95. Basic and acidic residues predominate over residues Asp80 to Ser89. The stretch at Lys105–Gln140 forms a coiled coil. 4 C3H1-type zinc fingers span residues Ser202–Glu228, Pro229–Asp256, Pro257–Tyr283, and Ser284–Gln312. The tract at residues Ser347–Val376 is disordered. A compositionally biased stretch (polar residues) spans Thr349–Ser369.

It is found in the nucleus. The protein is Zinc finger CCCH domain-containing protein C337.12 of Schizosaccharomyces pombe (strain 972 / ATCC 24843) (Fission yeast).